Reading from the N-terminus, the 689-residue chain is Glycine--tRNA ligase beta subunit (689 aa).

It belongs to the class-II aminoacyl-tRNA synthetase family. As to quaternary structure, tetramer of two alpha and two beta subunits.

It localises to the cytoplasm. The catalysed reaction is tRNA(Gly) + glycine + ATP = glycyl-tRNA(Gly) + AMP + diphosphate. This Glaesserella parasuis serovar 5 (strain SH0165) (Haemophilus parasuis) protein is Glycine--tRNA ligase beta subunit.